Here is a 490-residue protein sequence, read N- to C-terminus: CUGBP Elav-like family member 1 (490 aa).

RRM domains lie at 16–99 (IKMF…PADS) and 108–188 (RKLF…FADT). The interval 283–312 (PSAGSALTTSSSPLSILTSSGSSPSSNNNS) is disordered. Residues 405–483 (ANLFIYHLPQ…KRLKVQLKRS (79 aa)) form the RRM 3 domain.

Belongs to the CELF/BRUNOL family. In terms of assembly, oligomer. Oligomerization is required for RNA-binding and EDEN-dependent deadenylation. Post-translationally, phosphorylated during oocyte maturation and dephosphorylated following egg activation. Dephosphorylation is calcium dependent and correlates with the increase in the activity of EDEN-dependent deadenylation.

The protein resides in the nucleus. It is found in the cytoplasm. In terms of biological role, RNA-binding protein implicated in the regulation of several post-transcriptional events. May be involved in pre-mRNA alternative splicing, mRNA translation activation and stability. Mediates the rapid and sequence-specific cytoplasmic deadenylation of EDEN-containing maternal mRNAs following fertilization. Binds to AU-rich sequences (AREs) of jun mRNA. Binds to the embryonic deadenylation element (EDEN) motif localized in the 3'-UTR of maternal mRNAs. Binds to RNA containing several repeats of the consensus sequence 5'-UGU-3'. EDEN-dependent deadenylation is enhanced by the presence of an additional cis element composed of three AUU repeats. The chain is CUGBP Elav-like family member 1 (celf1) from Xenopus tropicalis (Western clawed frog).